The sequence spans 141 residues: MLMPKRVKYRKQQRGKMRGKAKGGTLVHFGDWGLKALEPHWITAQQIEACRIAIMRTLKRNGKVWIRVFPDKPITSKGIGVRMGKGKGDVEGWVAVVKPGKILFEIGGINDELAKEALAYAATKLPIKTKIVPRYEIGGEL.

Belongs to the universal ribosomal protein uL16 family. Part of the 50S ribosomal subunit.

Its function is as follows. Binds 23S rRNA and is also seen to make contacts with the A and possibly P site tRNAs. In Kosmotoga olearia (strain ATCC BAA-1733 / DSM 21960 / TBF 19.5.1), this protein is Large ribosomal subunit protein uL16.